A 450-amino-acid polypeptide reads, in one-letter code: Grayanic acid biosynthesis cluster O-methyltransferase (450 aa).

Asp254 contacts S-adenosyl-L-methionine. His301 serves as the catalytic Proton acceptor.

This sequence belongs to the class I-like SAM-binding methyltransferase superfamily. Cation-independent O-methyltransferase family. COMT subfamily.

The protein operates within secondary metabolite biosynthesis. Functionally, non-reducing polyketide synthase; part of the gene cluster that mediates the biosynthesis of orcinol depsidone grayanic acid (GRA), the only major secondary metabolite known in C.grayi. The first step consists in the ring and depside synthesis by PKS16 leading to 4-O-demethylsphaerophorin, involving different orcinol-like rings, one with acetyl CoA and the other with octanoyl CoA as the starter. Further depsidone formation by the GRA cluster-specific cytochrome P450 leads to 4-O-demethylgrayanic acid. Finally, the cluster specific O-methyltransferase probably converts the 4-O-demethylgrayanic acid into grayanic acid. The chain is Grayanic acid biosynthesis cluster O-methyltransferase from Cladonia grayi (Gray's cup lichen).